The primary structure comprises 357 residues: 3-dehydroquinate synthase (357 aa).

NAD(+)-binding positions include 99-103 (GATGD), 123-124 (TT), Lys-135, Lys-144, and 162-165 (FLET). Glu-177, His-247, and His-261 together coordinate Zn(2+).

The protein belongs to the sugar phosphate cyclases superfamily. Dehydroquinate synthase family. Co(2+) is required as a cofactor. Requires Zn(2+) as cofactor. The cofactor is NAD(+).

It localises to the cytoplasm. The enzyme catalyses 7-phospho-2-dehydro-3-deoxy-D-arabino-heptonate = 3-dehydroquinate + phosphate. Its pathway is metabolic intermediate biosynthesis; chorismate biosynthesis; chorismate from D-erythrose 4-phosphate and phosphoenolpyruvate: step 2/7. In terms of biological role, catalyzes the conversion of 3-deoxy-D-arabino-heptulosonate 7-phosphate (DAHP) to dehydroquinate (DHQ). The sequence is that of 3-dehydroquinate synthase from Macrococcus caseolyticus (strain JCSC5402) (Macrococcoides caseolyticum).